Here is a 253-residue protein sequence, read N- to C-terminus: MEIQDYTDSEFKHALARNLRSLTRGKKSSKQPIAILLGGQSGAGKTTIHRIKQKEFQGNIVIIDGDSFRSQHPHYLELQQEYGKDSVEYTKDFAGKMVESLVTKLSSLRYNLLIEGTLRTVDVPKKTAQLLKNKGYEVQLALIATKPELSYLSTLIRYEELYIINPNQARATPKEHHDFIVNHLVDNTRKLEELAIFERIQIYQRDRSCVYDSKENTTSAADVLQELLFGEWSQVEKEMLQVGEKRLNELLEK.

39–46 (GQSGAGKT) provides a ligand contact to ATP. Catalysis depends on Asp-66, which acts as the Proton acceptor.

This sequence belongs to the zeta toxin family. As to quaternary structure, forms a PezA(2)PezT(2) heterotetramer. The heterotetramer is much more stable than either of the proteins alone, and a specific mechanism may be necessary to liberate the toxin.

The enzyme catalyses UDP-N-acetyl-alpha-D-glucosamine + ATP = UDP-N-acetyl-alpha-D-glucosamine 3'-phosphate + ADP + H(+). Its function is as follows. Toxic component of a type II toxin-antitoxin (TA) system. Phosphorylates UDP-N-acetyl-D-glucosamine (UNAG) on the 3'-hydroxyl group of the N-acetyl-D-glucosamine moiety, yielding UNAG-3P. UNAG-3P inhibits MurA, the first committed step in cell wall synthesis, which is then blocked. Upon expression in E.coli results in decreased cell growth and viability, followed 3 hours later by growth restoration; the toxic effect and phosphorylation of UNAG are neutralized by coexpression with cognate antitoxin PezA. A mutant lacking the last 11 residues is stably maintained in E.coli, unlike the wild-type which undergoes spontaneous mutation. Expression of the deletion mutant in rapidly growing liquid cultures leads to cell bulging, permeabilization and massive lysis by 1 hour. Cells that survive are not able to undergo cytokinesis. Expression in slowly growing cells leads to bulging but not lysis. In terms of biological role, acts as a corepressor of its own operon with PezA; it is not clear if it binds DNA alone. The chain is Toxin PezT (pezT) from Streptococcus pneumoniae serotype 4 (strain ATCC BAA-334 / TIGR4).